Reading from the N-terminus, the 157-residue chain is Arginine repressor (157 aa).

Belongs to the ArgR family.

It localises to the cytoplasm. It functions in the pathway amino-acid biosynthesis; L-arginine biosynthesis [regulation]. Regulates arginine biosynthesis genes. This is Arginine repressor from Bacteroides fragilis (strain ATCC 25285 / DSM 2151 / CCUG 4856 / JCM 11019 / LMG 10263 / NCTC 9343 / Onslow / VPI 2553 / EN-2).